Here is a 389-residue protein sequence, read N- to C-terminus: Chaperone protein DnaJ (389 aa).

The J domain maps to 6-70 (DYYEVLGLAK…QKKAAYDQYG (65 aa)). The CR-type zinc-finger motif lies at 142 to 224 (GVEKEIKYNR…CHGTGHEKKA (83 aa)). Zn(2+)-binding residues include C155, C158, C172, C175, C198, C201, C212, and C215. CXXCXGXG motif repeat units follow at residues 155–162 (CATCGGNG), 172–179 (CHKCHGSG), 198–205 (CDVCHGTG), and 212–219 (CPTCHGTG).

It belongs to the DnaJ family. In terms of assembly, homodimer. Zn(2+) serves as cofactor.

Its subcellular location is the cytoplasm. In terms of biological role, participates actively in the response to hyperosmotic and heat shock by preventing the aggregation of stress-denatured proteins and by disaggregating proteins, also in an autonomous, DnaK-independent fashion. Unfolded proteins bind initially to DnaJ; upon interaction with the DnaJ-bound protein, DnaK hydrolyzes its bound ATP, resulting in the formation of a stable complex. GrpE releases ADP from DnaK; ATP binding to DnaK triggers the release of the substrate protein, thus completing the reaction cycle. Several rounds of ATP-dependent interactions between DnaJ, DnaK and GrpE are required for fully efficient folding. Also involved, together with DnaK and GrpE, in the DNA replication of plasmids through activation of initiation proteins. The sequence is that of Chaperone protein DnaJ from Enterococcus faecalis (strain ATCC 700802 / V583).